The following is a 704-amino-acid chain: Acetate--CoA ligase [ADP-forming] (704 aa).

In the N-terminal section; belongs to the acetate CoA ligase alpha subunit family. It in the C-terminal section; belongs to the acetate CoA ligase beta subunit family. As to quaternary structure, homodimer.

It catalyses the reaction acetate + ATP + CoA = acetyl-CoA + ADP + phosphate. Its function is as follows. Catalyzes the formation of acetate and ATP from acetyl-CoA by using ADP and phosphate. Can also use butyryl-CoA, but not phenylacetyl-CoA. Cannot catalyze the reverse reaction. The polypeptide is Acetate--CoA ligase [ADP-forming] (Methanocaldococcus jannaschii (strain ATCC 43067 / DSM 2661 / JAL-1 / JCM 10045 / NBRC 100440) (Methanococcus jannaschii)).